The following is a 444-amino-acid chain: Chromosome partition protein MukF (444 aa).

Residues leucine 211–isoleucine 239 form a leucine-zipper region.

Belongs to the MukF family. In terms of assembly, interacts, and probably forms a ternary complex, with MukE and MukB via its C-terminal region. The complex formation is stimulated by calcium or magnesium. It is required for an interaction between MukE and MukB.

It localises to the cytoplasm. Its subcellular location is the nucleoid. Functionally, involved in chromosome condensation, segregation and cell cycle progression. May participate in facilitating chromosome segregation by condensation DNA from both sides of a centrally located replisome during cell division. Not required for mini-F plasmid partitioning. Probably acts via its interaction with MukB and MukE. Overexpression results in anucleate cells. It has a calcium binding activity. The chain is Chromosome partition protein MukF from Actinobacillus succinogenes (strain ATCC 55618 / DSM 22257 / CCUG 43843 / 130Z).